We begin with the raw amino-acid sequence, 1204 residues long: Exportin-5 (1204 aa).

The interval 1–108 is necessary for interaction with Ran; the sequence is MEMEQVNALC…ANGTLRILEE (108 aa). The residue at position 396 (lysine 396) is an N6-acetyllysine. Residues 533 to 640 are necessary for interaction with ILF3; that stretch reads ELLQLVLNFE…KQLLSNELLL (108 aa). The segment at 641 to 642 is pre-siRNA binding; the sequence is TQ.

The protein belongs to the exportin family. In terms of assembly, component of a nuclear export receptor complex composed of XPO5, RAN, dsRNA-binding proteins and dsRNA. Found in a nuclear export complex with XPO5, RAN, EEF1A1, and aminoacylated tRNA. Found in a nuclear export complex with XPO5, RAN, ILF3 and dsRNA. Found in a nuclear export complex with XPO5, RAN and pre-miRNA. Found in a nuclear export complex with XPO5, RAN, ILF3 and minihelix VA1 dsRNA. Found in a nuclear export complex with XPO5, RAN, ILF3, ZNF346 and dsRNA. Interacts with EEF1A1, ILF3, NUP153, NUP214 and ZNF346. Interacts with RAN and cargo proteins in a GTP-dependent manner. Interacts with ADAR/ADAR1 (via DRBM domains). Interacts with SMAD4; mediates nuclear export of SMAD4. Interacts with RAN (GTP-bound form).

It localises to the nucleus. It is found in the cytoplasm. In terms of biological role, mediates the nuclear export of proteins bearing a double-stranded RNA binding domain (dsRBD) and double-stranded RNAs (cargos). XPO5 in the nucleus binds cooperatively to the RNA and to the GTPase Ran in its active GTP-bound form. Proteins containing dsRBDs can associate with this trimeric complex through the RNA. Docking of this complex to the nuclear pore complex (NPC) is mediated through binding to nucleoporins. Upon transit of a nuclear export complex into the cytoplasm, hydrolysis of Ran-GTP to Ran-GDP (induced by RANBP1 and RANGAP1, respectively) cause disassembly of the complex and release of the cargo from the export receptor. XPO5 then returns to the nuclear compartment by diffusion through the nuclear pore complex, to mediate another round of transport. The directionality of nuclear export is thought to be conferred by an asymmetric distribution of the GTP- and GDP-bound forms of Ran between the cytoplasm and nucleus. Overexpression may in some circumstances enhance RNA-mediated gene silencing (RNAi). Mediates nuclear export of ADAR/ADAR1 in a RanGTP-dependent manner. Mediates the nuclear export of micro-RNA precursors, which form short hairpins. Also mediates the nuclear export of synthetic short hairpin RNAs used for RNA interference. In some circumstances can also mediate the nuclear export of deacylated and aminoacylated tRNAs. Specifically recognizes dsRNAs that lack a 5'-overhang in a sequence-independent manner, have only a short 3'-overhang, and that have a double-stranded length of at least 15 base-pairs. Binding is dependent on Ran-GTP. The sequence is that of Exportin-5 (Xpo5) from Mus musculus (Mouse).